Reading from the N-terminus, the 1178-residue chain is Phytochrome B (1178 aa).

The span at 1–15 shows a compositional bias: polar residues; sequence MASGSRATPTRSPSS. The disordered stretch occupies residues 1–58; sequence MASGSRATPTRSPSSARPEAPRHAHHHHHHHSQSSGGSTSRAGGGGGGGGGGGGTAAT. The segment covering 23 to 32 has biased composition (basic residues); sequence HAHHHHHHHS. Residues 42–55 are compositionally biased toward gly residues; sequence AGGGGGGGGGGGGT. Positions 267 to 449 constitute a GAF domain; the sequence is DIKLLCDTVV…AFGLQLNMEL (183 aa). C372 lines the phytochromobilin pocket. PAS domains follow at residues 668 to 739 and 802 to 873; these read VARE…LRGE and DYKA…MVVI. The Histidine kinase domain maps to 950 to 1170; that stretch reads YICQEIKNPL…LIVLELPQPR (221 aa).

Belongs to the phytochrome family. Homodimer. Post-translationally, contains one covalently linked phytochromobilin chromophore.

Functionally, regulatory photoreceptor which exists in two forms that are reversibly interconvertible by light: the Pr form that absorbs maximally in the red region of the spectrum and the Pfr form that absorbs maximally in the far-red region. Photoconversion of Pr to Pfr induces an array of morphogenic responses, whereas reconversion of Pfr to Pr cancels the induction of those responses. Pfr controls the expression of a number of nuclear genes including those encoding the small subunit of ribulose-bisphosphate carboxylase, chlorophyll A/B binding protein, protochlorophyllide reductase, rRNA, etc. It also controls the expression of its own gene(s) in a negative feedback fashion. This chain is Phytochrome B (PHYB), found in Sorghum bicolor (Sorghum).